A 692-amino-acid polypeptide reads, in one-letter code: Chaperone protein dnaK1 (692 aa).

T197 carries the post-translational modification Phosphothreonine; by autocatalysis.

The protein belongs to the heat shock protein 70 family.

In terms of biological role, acts as a chaperone. The chain is Chaperone protein dnaK1 (dnaK1) from Synechocystis sp. (strain ATCC 27184 / PCC 6803 / Kazusa).